The chain runs to 170 residues: uncharacterized protein (170 aa).

This is an uncharacterized protein from Treponema pallidum (strain Nichols).